We begin with the raw amino-acid sequence, 299 residues long: Serine/threonine-protein kinase 1 (299 aa).

The Protein kinase domain maps to 39–277 (IATKPMFEGG…FKGLVSHPWF (239 aa)). ATP contacts are provided by residues 45–53 (FEGGRRNNV) and Lys66. Residue Asp153 is the Proton acceptor of the active site.

Belongs to the protein kinase superfamily. Ser/Thr protein kinase family.

It is found in the virion. Its subcellular location is the host cytoplasm. It carries out the reaction L-seryl-[protein] + ATP = O-phospho-L-seryl-[protein] + ADP + H(+). The catalysed reaction is L-threonyl-[protein] + ATP = O-phospho-L-threonyl-[protein] + ADP + H(+). Functionally, essential for viral replication. It may mediate the virus progression through DNA replication. This is Serine/threonine-protein kinase 1 from African swine fever virus (isolate Tick/Malawi/Lil 20-1/1983) (ASFV).